The following is a 492-amino-acid chain: Nuclear hormone receptor family member nhr-4 (492 aa).

A DNA-binding region (nuclear receptor) is located at residues 47–122 (RLICDVCGDV…VGMNPDSVQN (76 aa)). NR C4-type zinc fingers lie at residues 50-70 (CDVCGDVAFGKHYGINACNGC) and 86-110 (CRFGGDCPVVKEHRNVCRSCRLKKC). The disordered stretch occupies residues 121–143 (QNERDRNAKNGGMGGPMSSPTQS). Positions 215–481 (MDFSIHSAVL…ELIQATHKTT (267 aa)) constitute an NR LBD domain.

The protein belongs to the nuclear hormone receptor family.

The protein resides in the nucleus. Its function is as follows. Orphan nuclear receptor. This is Nuclear hormone receptor family member nhr-4 (nhr-4) from Caenorhabditis elegans.